The primary structure comprises 265 residues: Mlc titration factor A (265 aa).

Zn(2+) is bound by residues H111, H148, H152, and E211.

The protein belongs to the MtfA family. In terms of assembly, interacts with Mlc. Requires Zn(2+) as cofactor.

The protein localises to the cytoplasm. Its function is as follows. Involved in the modulation of the activity of the glucose-phosphotransferase system (glucose-PTS). Interacts with the transcriptional repressor Mlc, preventing its interaction with DNA and leading to the modulation of expression of genes regulated by Mlc, including ptsG, which encodes the PTS system glucose-specific EIICB component. Functionally, shows zinc-dependent metallopeptidase activity. The chain is Mlc titration factor A from Escherichia coli (strain SMS-3-5 / SECEC).